The sequence spans 307 residues: Transcription initiation factor IIF subunit beta (307 aa).

Over residues 1–12 (MSEEKPTVRTEE) the composition is skewed to basic and acidic residues. 2 disordered regions span residues 1-22 (MSEE…DAGD) and 261-307 (VELR…IDVV). Acidic residues predominate over residues 13–22 (DDRYEDDAGD). The segment covering 263 to 290 (LRNQQASQSESSSIDHTGKNTSPDNPGT) has biased composition (polar residues). Positions 292-307 (AEEDEDDDGVEMIDVV) are enriched in acidic residues.

It belongs to the TFIIF beta subunit family. As to quaternary structure, component of the fcp1/TFIIF/polII complex via interaction of tfg3 with both tfg1/TFIIF-alpha and tfg2/TFIIF-beta subunits.

The protein localises to the nucleus. Functionally, TFIIF is a general transcription initiation factor that binds to RNA polymerase II and helps to recruit it to the initiation complex in collaboration with TFIIB. It promotes transcription elongation. This Schizosaccharomyces pombe (strain 972 / ATCC 24843) (Fission yeast) protein is Transcription initiation factor IIF subunit beta (tfg2).